Consider the following 122-residue polypeptide: Large ribosomal subunit protein bL12 (122 aa).

It belongs to the bacterial ribosomal protein bL12 family. In terms of assembly, homodimer. Part of the ribosomal stalk of the 50S ribosomal subunit. Forms a multimeric L10(L12)X complex, where L10 forms an elongated spine to which 2 to 4 L12 dimers bind in a sequential fashion. Binds GTP-bound translation factors.

Functionally, forms part of the ribosomal stalk which helps the ribosome interact with GTP-bound translation factors. Is thus essential for accurate translation. The polypeptide is Large ribosomal subunit protein bL12 (Mesoplasma florum (strain ATCC 33453 / NBRC 100688 / NCTC 11704 / L1) (Acholeplasma florum)).